Consider the following 408-residue polypeptide: Inhibin beta B chain (408 aa).

The first 28 residues, 1-28 (MDGLPGRALGAACLLMLAVGSLGPGVWG), serve as a signal peptide directing secretion. The tract at residues 29–60 (SPTPPPLPAAPQPPPPPPGAPGGSQDTCTSCG) is disordered. The propeptide occupies 29-293 (SPTPPPLPAA…GDSRHRIRKR (265 aa)). Residues 30–48 (PTPPPLPAAPQPPPPPPGA) are compositionally biased toward pro residues. Asparagine 94 carries an N-linked (GlcNAc...) asparagine glycan. 4 disulfides stabilise this stretch: cysteine 297-cysteine 305, cysteine 304-cysteine 373, cysteine 333-cysteine 405, and cysteine 337-cysteine 407.

This sequence belongs to the TGF-beta family. As to quaternary structure, dimeric, linked by one or more disulfide bonds. Inhibin B is a dimer of alpha and beta-B. Activin B is a homodimer of beta-B. Activin AB is a dimer of beta-A and beta-B. Interacts with FST and FSTL3.

The protein localises to the secreted. Functionally, inhibins and activins inhibit and activate, respectively, the secretion of follitropin by the pituitary gland. Inhibins/activins are involved in regulating a number of diverse functions such as hypothalamic and pituitary hormone secretion, gonadal hormone secretion, germ cell development and maturation, erythroid differentiation, insulin secretion, nerve cell survival, embryonic axial development or bone growth, depending on their subunit composition. Inhibins appear to oppose the functions of activins. In terms of biological role, activin B is a dimer of alpha and beta-B that plays a role in several essential biological processes including embryonic development, stem cell maintenance and differentiation, haematopoiesis, cell proliferation and wound healing. Signals through type I receptor ACVR1C, abundantly expressed in pancreatic beta cells, and type II receptors like ACVR2A. Upon ligand binding, these receptors phosphorylate intracellular signaling mediators SMAD2 and SMAD3, which form a complex with SMAD4, translocate to the nucleus, and regulate gene expression. Plays a crucial role in the induction of hepcidin by inflammation through activation of ACVR1C and subsequent phosphorylation of SMAD1/5/8. Regulates adipocyte lipid metabolism by decreasing non-esterified fatty acids and glycerol release and increases intracellular triglyceride content. Stimulates wound healing by promoting cell migration and hair follicle regeneration through the JNK and ERK signaling pathways downstream of RHOA. Inhibin B is a dimer of alpha and beta-B that plays a crucial role in the regulation of the reproductive system by inhibiting the secretion of follicle-stimulating hormone (FSH) from the anterior pituitary gland. Thereby, maintains reproductive homeostasis in both males and females. Acts as a more potent suppressor of FSH release than inhibin A. Functions as competitive receptor antagonist binding activin type II receptors with high affinity in the presence of the TGF-beta type III coreceptor/TGFBR3L. The sequence is that of Inhibin beta B chain (INHBB) from Bos taurus (Bovine).